A 195-amino-acid chain; its full sequence is ATP-dependent Clp protease proteolytic subunit (195 aa).

The active-site Nucleophile is the Ser98. Residue His123 is part of the active site.

The protein belongs to the peptidase S14 family. As to quaternary structure, fourteen ClpP subunits assemble into 2 heptameric rings which stack back to back to give a disk-like structure with a central cavity, resembling the structure of eukaryotic proteasomes.

Its subcellular location is the cytoplasm. It catalyses the reaction Hydrolysis of proteins to small peptides in the presence of ATP and magnesium. alpha-casein is the usual test substrate. In the absence of ATP, only oligopeptides shorter than five residues are hydrolyzed (such as succinyl-Leu-Tyr-|-NHMec, and Leu-Tyr-Leu-|-Tyr-Trp, in which cleavage of the -Tyr-|-Leu- and -Tyr-|-Trp bonds also occurs).. Its function is as follows. Cleaves peptides in various proteins in a process that requires ATP hydrolysis. Has a chymotrypsin-like activity. Plays a major role in the degradation of misfolded proteins. The protein is ATP-dependent Clp protease proteolytic subunit of Helicobacter pylori (strain J99 / ATCC 700824) (Campylobacter pylori J99).